Consider the following 285-residue polypeptide: Ribosomal RNA small subunit methyltransferase H (285 aa).

S-adenosyl-L-methionine contacts are provided by residues 34 to 36 (AGH), D51, F75, D96, and H103. Positions 259 to 285 (LVPSEKEAAQNPRARSAKLRAAEKEAP) are disordered.

This sequence belongs to the methyltransferase superfamily. RsmH family.

Its subcellular location is the cytoplasm. It catalyses the reaction cytidine(1402) in 16S rRNA + S-adenosyl-L-methionine = N(4)-methylcytidine(1402) in 16S rRNA + S-adenosyl-L-homocysteine + H(+). Functionally, specifically methylates the N4 position of cytidine in position 1402 (C1402) of 16S rRNA. The sequence is that of Ribosomal RNA small subunit methyltransferase H from Thermus thermophilus (strain ATCC 27634 / DSM 579 / HB8).